A 448-amino-acid chain; its full sequence is Portal protein (448 aa).

The tract at residues 1 to 25 is disordered; the sequence is MAKRGRKPKELVPGPGSIDPSDVPK.

Belongs to the P23virus portal protein family. As to quaternary structure, homododecamer. Interacts with the capsid protein. Interacts with the terminase large subunit; this interaction allows the packaging of viral DNA.

It localises to the virion. Its function is as follows. Forms the portal vertex of the capsid. This portal plays critical roles in head assembly, genome packaging, neck/tail attachment, and genome ejection. The portal protein multimerizes as a single ring-shaped homododecamer arranged around a central channel. Forms the portal vertex of the capsid. This portal plays critical roles in head assembly, genome packaging, neck/tail attachment, and genome ejection. The protein is Portal protein of Thermus thermophilus (Thermus thermophilus phage P23-45).